The primary structure comprises 283 residues: Phosphate import ATP-binding protein PstB 1 (283 aa).

Over residues 1–16 the composition is skewed to acidic residues; sequence MSSDDTTDPTADDESF. A disordered region spans residues 1 to 35; the sequence is MSSDDTTDPTADDESFTDSPVAGLEQSTTTRGSGR. The region spanning 38–278 is the ABC transporter domain; sequence ISARNINVWY…PSSERVENYI (241 aa). Residue 70–77 coordinates ATP; that stretch reads GPSGCGKS.

This sequence belongs to the ABC transporter superfamily. Phosphate importer (TC 3.A.1.7) family. As to quaternary structure, the complex is composed of two ATP-binding proteins (PstB), two transmembrane proteins (PstC and PstA) and a solute-binding protein (PstS).

Its subcellular location is the cell membrane. The catalysed reaction is phosphate(out) + ATP + H2O = ADP + 2 phosphate(in) + H(+). In terms of biological role, part of the ABC transporter complex PstSACB involved in phosphate import. Responsible for energy coupling to the transport system. In Natronomonas pharaonis (strain ATCC 35678 / DSM 2160 / CIP 103997 / JCM 8858 / NBRC 14720 / NCIMB 2260 / Gabara) (Halobacterium pharaonis), this protein is Phosphate import ATP-binding protein PstB 1.